The primary structure comprises 694 residues: Elongation factor G (694 aa).

The tr-type G domain maps to 8–285 (EKVRNIGIAA…AVVELLPSPQ (278 aa)). GTP-binding positions include 17–24 (AHIDAGKT), 81–85 (DTPGH), and 135–138 (NKMD).

This sequence belongs to the TRAFAC class translation factor GTPase superfamily. Classic translation factor GTPase family. EF-G/EF-2 subfamily.

The protein localises to the cytoplasm. Functionally, catalyzes the GTP-dependent ribosomal translocation step during translation elongation. During this step, the ribosome changes from the pre-translocational (PRE) to the post-translocational (POST) state as the newly formed A-site-bound peptidyl-tRNA and P-site-bound deacylated tRNA move to the P and E sites, respectively. Catalyzes the coordinated movement of the two tRNA molecules, the mRNA and conformational changes in the ribosome. The sequence is that of Elongation factor G (fusA) from Synechococcus sp. (strain ATCC 27144 / PCC 6301 / SAUG 1402/1) (Anacystis nidulans).